Reading from the N-terminus, the 513-residue chain is Activin receptor type-2A (513 aa).

The first 19 residues, 1–19 (MGAAAKLAFAVFLISCSSG), serve as a signal peptide directing secretion. Over 20–135 (AILGRSETQE…TSNPVTPKPP (116 aa)) the chain is Extracellular. 5 disulfides stabilise this stretch: Cys30/Cys60, Cys50/Cys78, Cys85/Cys104, Cys91/Cys103, and Cys105/Cys110. 2 N-linked (GlcNAc...) asparagine glycosylation sites follow: Asn43 and Asn66. A helical membrane pass occupies residues 136-161 (YYNILLYSLVPLMLIAGIVICAFWVY). At 162 to 513 (RHHKMAYPPV…VDFPPKESSL (352 aa)) the chain is on the cytoplasmic side. Residues 192-485 (LQLLEVKARG…GERITQMQRL (294 aa)) enclose the Protein kinase domain. ATP contacts are provided by residues 198-206 (KARGRFGCV) and Lys219. Asp322 acts as the Proton acceptor in catalysis.

The protein belongs to the protein kinase superfamily. TKL Ser/Thr protein kinase family. TGFB receptor subfamily. In terms of assembly, part of a complex consisting of MAGI2/ARIP1, ACVR2A, ACVR1B and SMAD3. Interacts with MAGI2/ARIP1. Interacts with type I receptor ACVR1. Interacts with BMP7. Interacts with TSC22D1/TSC-22. Interacts with activin A/INHBA. It depends on Mg(2+) as a cofactor. Requires Mn(2+) as cofactor. In terms of tissue distribution, brain, testis, intestine, liver and kidney.

The protein localises to the cell membrane. The enzyme catalyses L-threonyl-[receptor-protein] + ATP = O-phospho-L-threonyl-[receptor-protein] + ADP + H(+). It carries out the reaction L-seryl-[receptor-protein] + ATP = O-phospho-L-seryl-[receptor-protein] + ADP + H(+). Functionally, on ligand binding, forms a receptor complex consisting of two type II and two type I transmembrane serine/threonine kinases. Type II receptors phosphorylate and activate type I receptors which autophosphorylate, then bind and activate SMAD transcriptional regulators. Receptor for activin A, activin B and inhibin A. Mediates induction of adipogenesis by GDF6. In Mus musculus (Mouse), this protein is Activin receptor type-2A.